An 884-amino-acid polypeptide reads, in one-letter code: Valine--tRNA ligase (884 aa).

Residues P46–H56 carry the 'HIGH' region motif. The short motif at K520–S524 is the 'KMSKS' region element. K523 is a binding site for ATP. The stretch at L809–R844 forms a coiled coil.

This sequence belongs to the class-I aminoacyl-tRNA synthetase family. ValS type 1 subfamily. Monomer.

Its subcellular location is the cytoplasm. The enzyme catalyses tRNA(Val) + L-valine + ATP = L-valyl-tRNA(Val) + AMP + diphosphate. Its function is as follows. Catalyzes the attachment of valine to tRNA(Val). As ValRS can inadvertently accommodate and process structurally similar amino acids such as threonine, to avoid such errors, it has a 'posttransfer' editing activity that hydrolyzes mischarged Thr-tRNA(Val) in a tRNA-dependent manner. This chain is Valine--tRNA ligase, found in Streptococcus agalactiae serotype Ia (strain ATCC 27591 / A909 / CDC SS700).